The sequence spans 443 residues: Xaa-Pro dipeptidase (443 aa).

Mn(2+)-binding residues include D246, D257, H339, E384, and E423.

The protein belongs to the peptidase M24B family. Bacterial-type prolidase subfamily. The cofactor is Mn(2+).

It catalyses the reaction Xaa-L-Pro dipeptide + H2O = an L-alpha-amino acid + L-proline. Splits dipeptides with a prolyl residue in the C-terminal position. In Pectobacterium carotovorum subsp. carotovorum (strain PC1), this protein is Xaa-Pro dipeptidase.